The primary structure comprises 490 residues: GTPase Der (490 aa).

EngA-type G domains lie at 3 to 166 (PVVA…AEAM) and 200 to 373 (IKLA…DSAT). GTP contacts are provided by residues 9 to 16 (GRPNVGKS), 56 to 60 (DTGGI), 118 to 121 (NKVD), 206 to 213 (GKPNVGKS), 253 to 257 (DTAGV), and 318 to 321 (NKWD). In terms of domain architecture, KH-like spans 374–458 (RRVSTSMLTR…PIQLRFQEGG (85 aa)).

Belongs to the TRAFAC class TrmE-Era-EngA-EngB-Septin-like GTPase superfamily. EngA (Der) GTPase family. Associates with the 50S ribosomal subunit.

GTPase that plays an essential role in the late steps of ribosome biogenesis. In Shewanella halifaxensis (strain HAW-EB4), this protein is GTPase Der.